A 95-amino-acid chain; its full sequence is Defensin (95 aa).

The signal sequence occupies residues 1–17 (MKNYVFALLVVTAVAIA). Residues 18–55 (LPNEDKNAPMRVHLLPQKEDESLKLEVTPVKEHHRTRR) constitute a propeptide that is removed on maturation. Disulfide bonds link cysteine 58–cysteine 85, cysteine 71–cysteine 91, and cysteine 75–cysteine 93.

It belongs to the invertebrate defensin family. Type 1 subfamily.

It is found in the secreted. Its function is as follows. Antibacterial peptide mostly active against Gram-positive bacteria. This Formica aquilonia (Red wood ant) protein is Defensin.